Reading from the N-terminus, the 397-residue chain is Mycinamicin IV hydroxylase/epoxidase (397 aa).

The tract at residues 63 to 86 (RGPSMTRDEPRTRPEMVKGGLLSM) is disordered. Residues 68–78 (TRDEPRTRPEM) are compositionally biased toward basic and acidic residues. Residue G81 coordinates substrate. Heme-binding residues include H91, R95, R288, H344, and C346.

Belongs to the cytochrome P450 family. It depends on heme as a cofactor.

It functions in the pathway antibiotic biosynthesis; mycinamicin biosynthesis. Its function is as follows. Involved in the biosynthesis of mycinamicin, a 16-membered macrolide antibiotic. Catalyzes consecutive hydroxylation (at C14) and epoxidation (at C12-C13) reactions with mycinamicin IV as initial substrate, leading to mycinamicin II. These reactions require prior dimethylation of 6-deoxyallose to mycinose for effective conversion by the dual function MycG enzyme. The protein is Mycinamicin IV hydroxylase/epoxidase of Micromonospora griseorubida.